The chain runs to 474 residues: Crocetin glucosyltransferase, chloroplastic (474 aa).

Residues 1–45 constitute a chloroplast transit peptide; sequence MVQQRHVLLITYPAQGHINPALQFAQRLLRMGIQVTLATSVYALS. His-17 functions as the Proton acceptor in the catalytic mechanism. His-17 lines the an anthocyanidin pocket. UDP-alpha-D-glucose contacts are provided by Gln-346, His-361, Trp-364, Asn-365, Ser-366, Glu-369, Asp-385, and Gln-386.

Belongs to the UDP-glycosyltransferase family. In terms of tissue distribution, ubiquitous.

The protein localises to the plastid. It is found in the chloroplast. It catalyses the reaction crocetin + UDP-alpha-D-glucose = beta-D-glucosyl crocetin + UDP. The catalysed reaction is beta-D-glucosyl crocetin + UDP-alpha-D-glucose = bis(beta-D-glucosyl) crocetin + UDP. It carries out the reaction beta-D-gentiobiosyl crocetin + UDP-alpha-D-glucose = beta-D-gentiobiosyl beta-D-glucosyl crocetin + UDP. In terms of biological role, glucosyltransferase acting on a broad range of substrates, including crocetin, 4-coumaric acid, caffeic acid and ferulic acid. No activity with indol-3-acetic acid, bixin and norbixin, and no formation of O-glucosides. Involved with UGT94E5 in sequential glycosylation of crocetin to crocin (bis(beta-D-gentiobiosyl) crocetin). The sequence is that of Crocetin glucosyltransferase, chloroplastic (UGT75L6) from Gardenia jasminoides (Cape jasmine).